A 529-amino-acid chain; its full sequence is GMP synthase [glutamine-hydrolyzing] (529 aa).

Positions 16 to 205 (PVLVVDFGAQ…LHDFAGLDAD (190 aa)) constitute a Glutamine amidotransferase type-1 domain. Cys93 functions as the Nucleophile in the catalytic mechanism. Residues His179 and Glu181 contribute to the active site. The region spanning 206–403 (WTAANIAGVL…LDLPEEIVAR (198 aa)) is the GMPS ATP-PPase domain. 233 to 239 (SGGVDSA) contacts ATP.

As to quaternary structure, homodimer.

The catalysed reaction is XMP + L-glutamine + ATP + H2O = GMP + L-glutamate + AMP + diphosphate + 2 H(+). The protein operates within purine metabolism; GMP biosynthesis; GMP from XMP (L-Gln route): step 1/1. In terms of biological role, catalyzes the synthesis of GMP from XMP. The polypeptide is GMP synthase [glutamine-hydrolyzing] (Mycobacterium leprae (strain Br4923)).